We begin with the raw amino-acid sequence, 294 residues long: Large ribosomal subunit protein uL4m (294 aa).

Residues 119–139 (EVSGGGRKPWQQKGSGRARHG) form a disordered region. Arginine 147 is modified (omega-N-methylarginine).

This sequence belongs to the universal ribosomal protein uL4 family. In terms of assembly, component of the mitochondrial ribosome large subunit (39S) which comprises a 16S rRNA and about 50 distinct proteins. Interacts with MIEF1 upstream open reading frame protein.

The protein localises to the mitochondrion. In Mus musculus (Mouse), this protein is Large ribosomal subunit protein uL4m (Mrpl4).